Consider the following 302-residue polypeptide: Acetyl-coenzyme A carboxylase carboxyl transferase subunit beta (302 aa).

One can recognise a CoA carboxyltransferase N-terminal domain in the interval 25–294; that stretch reads VWTKCDSCGQ…PHFDEAAPVS (270 aa). 4 residues coordinate Zn(2+): cysteine 29, cysteine 32, cysteine 48, and cysteine 51. The segment at 29 to 51 adopts a C4-type zinc-finger fold; the sequence is CDSCGQVLYRAELERNLEVCPKC. The tract at residues 281 to 302 is disordered; that stretch reads NQPQPHFDEAAPVSEQENQADA.

It belongs to the AccD/PCCB family. As to quaternary structure, acetyl-CoA carboxylase is a heterohexamer composed of biotin carboxyl carrier protein (AccB), biotin carboxylase (AccC) and two subunits each of ACCase subunit alpha (AccA) and ACCase subunit beta (AccD). Zn(2+) serves as cofactor.

It localises to the cytoplasm. The enzyme catalyses N(6)-carboxybiotinyl-L-lysyl-[protein] + acetyl-CoA = N(6)-biotinyl-L-lysyl-[protein] + malonyl-CoA. The protein operates within lipid metabolism; malonyl-CoA biosynthesis; malonyl-CoA from acetyl-CoA: step 1/1. Its function is as follows. Component of the acetyl coenzyme A carboxylase (ACC) complex. Biotin carboxylase (BC) catalyzes the carboxylation of biotin on its carrier protein (BCCP) and then the CO(2) group is transferred by the transcarboxylase to acetyl-CoA to form malonyl-CoA. The chain is Acetyl-coenzyme A carboxylase carboxyl transferase subunit beta from Serratia proteamaculans (strain 568).